Consider the following 292-residue polypeptide: Ribosomal RNA small subunit methyltransferase I (292 aa).

Belongs to the methyltransferase superfamily. RsmI family.

The protein resides in the cytoplasm. It catalyses the reaction cytidine(1402) in 16S rRNA + S-adenosyl-L-methionine = 2'-O-methylcytidine(1402) in 16S rRNA + S-adenosyl-L-homocysteine + H(+). Catalyzes the 2'-O-methylation of the ribose of cytidine 1402 (C1402) in 16S rRNA. The sequence is that of Ribosomal RNA small subunit methyltransferase I from Bacillus subtilis (strain 168).